The following is a 500-amino-acid chain: Cytochrome P450 6B4 (500 aa).

Cys-443 contacts heme.

The protein belongs to the cytochrome P450 family. The cofactor is heme.

It localises to the endoplasmic reticulum membrane. The protein localises to the microsome membrane. It carries out the reaction an organic molecule + reduced [NADPH--hemoprotein reductase] + O2 = an alcohol + oxidized [NADPH--hemoprotein reductase] + H2O + H(+). Its function is as follows. Enables the insect to feed on furanocoumarin-producing plants and evolved as an adaptation for detoxification of xanthotoxin and other furanocoumarins. This isozyme metabolizes isopimpinellin, imperatorin, and bergapten at high rates, xanthotoxin and psoralen at intermediate rates and angelicin, sphondin, and trioxsalen only at very low rates. This chain is Cytochrome P450 6B4 (CYP6B4), found in Papilio glaucus (Eastern tiger swallowtail butterfly).